The primary structure comprises 549 residues: MSQSQVPSRAGHYNMTALANALPQANYRQAPWNNGSQMRYNPAGASPNVVGQTQSSPQYNGQPGMGSMPNQGYYMPQQQQQQQQMPQYYGGPMSPSQPQPNMSSRPNVPFYGNQVMSNHQAHPSMGYYYAQVPAYALQGHPPHQAPVDSQSNVVRGPPRKPRQSGHAIWIGNLPSQTDLMSLVHHVCREAQGLESLFLISKSNCAFANFRDEASCLTAQQKLHESKFQSVRLVSRLRKNTVEGASGITAPTGPSATTPQQAVAPEVKEIEQIDSTETQSDNADTDTPTAVGTPDAKGPAVVDAAQKDRFFVLKSLTVEDLDLSVRTGIWATQSHNEEALNSAFKNAENVYLVFSANKSGEYFGYARMVSTINEDPAAAIEFAPKAQSVNEVDLPREIPTEPTKFTPKGRIIDDSARGTIFWEIAREDSSEGVTQEEPAPAVAEQDDTTGGLDGNSENKTWGKPFKLEWLSTTRLPFYRCRGLRNPWNSNREVKIARDGTELEPSVGRRLIGLFNRSHNSPGPRGPMMGMGQMMSPSQQQMPMGYPPPYS.

Disordered regions lie at residues Gln29–Met102, Gly139–Gly165, Gly243–Val262, Asp273–Pro298, and Arg425–Lys458. The segment covering Val49–Gly61 has biased composition (polar residues). The segment covering Gln71 to Met102 has biased composition (low complexity). Polar residues-rich tracts occupy residues Thr251–Gln260 and Asp273–Ala289. The YTH domain occupies Asp307–Phe513.

Belongs to the YTHDF family. YTHDF1 subfamily.

Functionally, specifically recognizes and binds N6-methyladenosine (m6A)-containing mRNAs, and regulates their stability. M6A is a modification present at internal sites of mRNAs and some non-coding RNAs and plays a role in mRNA stability and processing. Directly interacts with the acid phosphatase APHA mRNA to increase its stability. This is YTH domain-containing family protein 1 from Cryphonectria parasitica (strain ATCC 38755 / EP155).